A 78-amino-acid polypeptide reads, in one-letter code: uncharacterized protein (78 aa).

Transmembrane regions (helical) follow at residues 5–24 (LALLILVIPGAISALGIKLM) and 39–61 (LWLQGLSGFIFFAIGLYVLAGFI).

Its subcellular location is the cell membrane. This is an uncharacterized protein from Bacillus subtilis (strain 168).